A 322-amino-acid chain; its full sequence is Solute carrier family 35 member B1 (322 aa).

A run of 8 helical transmembrane segments spans residues 12–32 (LRLP…GILQ), 51–71 (FALT…KILI), 85–105 (WLYA…NSAL), 136–156 (YPLA…LFMY), 168–188 (TVGF…LTGV), 210–230 (LWST…WEFL), 243–263 (ILLF…TVVY), and 285–305 (VILF…LVFL). The Di-lysine motif signature appears at 318–322 (KKTSH).

It belongs to the nucleotide-sugar transporter family. SLC35B subfamily.

Its subcellular location is the endoplasmic reticulum membrane. It catalyses the reaction ADP(in) + ATP(out) = ADP(out) + ATP(in). The enzyme catalyses UDP(out) + ATP(in) = UDP(in) + ATP(out). It carries out the reaction UTP(out) + ATP(in) = UTP(in) + ATP(out). The catalysed reaction is dATP(out) + ATP(in) = dATP(in) + ATP(out). Its function is as follows. ATP:ADP antiporter that catalyzes the exchange of ATP and ADP across the endoplasmic reticulum (ER) membrane. Imports ATP from the cytosol to the ER lumen and exports ADP in the opposite direction. Regulates ER energy metabolism and protein biogenesis. Appears to be part of a calcium-dependent ER to cytosol low energy response axis, where calcium efflux from ER to the cytosol triggers ATP import into the ER lumen to maintain sufficient ATP supply. Provides ATP to ER chaperone HSPA5 that drives protein folding and trafficking in the ER. Can transport dATP, UTP or UDP in exchange for ATP, but the physiological relevance of this process remains to be established. The chain is Solute carrier family 35 member B1 (Slc35b1) from Mus musculus (Mouse).